We begin with the raw amino-acid sequence, 791 residues long: Vezatin (791 aa).

Transmembrane regions (helical) follow at residues 138 to 158 (IATP…ALAA) and 163 to 183 (SISS…FTVL). The stretch at 435-464 (VRSLQLHLKALLNEVIILEDELEKLSSCKE) forms a coiled coil. Positions 752–769 (GDEWDDDDDDNDNDDDNY) are enriched in acidic residues. The interval 752-791 (GDEWDDDDDDNDNDDDNYDQVKNVESHEKERNNVSLQLEE) is disordered. Basic and acidic residues predominate over residues 773–783 (KNVESHEKERN).

Belongs to the vezatin family. As to quaternary structure, interacts with myosin VIIa and the cadherin-catenins complex.

The protein localises to the cell membrane. It is found in the cell junction. Its subcellular location is the adherens junction. The protein resides in the nucleus. In terms of biological role, plays a pivotal role in the establishment of adherens junctions and their maintenance in adult life. In Xenopus tropicalis (Western clawed frog), this protein is Vezatin (vezt).